A 156-amino-acid polypeptide reads, in one-letter code: VapC ribonuclease AF_1683 (156 aa).

The PINc domain occupies 4–125; it reads LIDTGIFFGF…KLISYDSRFS (122 aa). Mg(2+) contacts are provided by aspartate 6 and aspartate 103.

It belongs to the PINc/VapC protein family. Mg(2+) serves as cofactor.

Toxic component of a type II toxin-antitoxin (TA) system. An RNase. The sequence is that of VapC ribonuclease AF_1683 from Archaeoglobus fulgidus (strain ATCC 49558 / DSM 4304 / JCM 9628 / NBRC 100126 / VC-16).